Consider the following 393-residue polypeptide: Homoserine O-succinyltransferase (393 aa).

One can recognise an AB hydrolase-1 domain in the interval 62 to 372 (NAVLVCHALN…PHGHDAFLLD (311 aa)). Residue Ser-168 is the Nucleophile of the active site. Arg-238 contributes to the substrate binding site. Residues Asp-333 and His-366 contribute to the active site. Asp-367 is a substrate binding site.

The protein belongs to the AB hydrolase superfamily. MetX family. As to quaternary structure, homodimer.

The protein localises to the cytoplasm. The catalysed reaction is L-homoserine + succinyl-CoA = O-succinyl-L-homoserine + CoA. Its pathway is amino-acid biosynthesis; L-methionine biosynthesis via de novo pathway; O-succinyl-L-homoserine from L-homoserine: step 1/1. In terms of biological role, transfers a succinyl group from succinyl-CoA to L-homoserine, forming succinyl-L-homoserine. This is Homoserine O-succinyltransferase from Cupriavidus necator (strain ATCC 17699 / DSM 428 / KCTC 22496 / NCIMB 10442 / H16 / Stanier 337) (Ralstonia eutropha).